The following is a 30-amino-acid chain: Bowman-Birk type proteinase inhibitor 4 (30 aa).

Disulfide bonds link C9/C24 and C14/C22.

Its function is as follows. Inhibits trypsin (IC(50)=17.60 nM) and, to a lesser extent, alpha-chymotrypsin (IC(50)=2.38 uM). This Lathyrus sativus (White vetchling) protein is Bowman-Birk type proteinase inhibitor 4.